The primary structure comprises 186 residues: Nucleoside diphosphate kinase, mitochondrial (186 aa).

The N-terminal 32 residues, 1 to 32 (MGSLFGRVAALRALLCGPRFQCLLVRPSSGGP), are a transit peptide targeting the mitochondrion. Residues Lys44, Phe92, Arg120, Thr126, Arg137, and Asn147 each contribute to the ATP site. His150 functions as the Pros-phosphohistidine intermediate in the catalytic mechanism.

This sequence belongs to the NDK family. As to quaternary structure, homohexamer. Interacts with OPA1. Interacts with CAPN8. Requires Mg(2+) as cofactor. In terms of tissue distribution, expressed in the base region of the oxyntic and pyloric mucosae.

The protein localises to the mitochondrion intermembrane space. It is found in the mitochondrion matrix. It carries out the reaction a 2'-deoxyribonucleoside 5'-diphosphate + ATP = a 2'-deoxyribonucleoside 5'-triphosphate + ADP. It catalyses the reaction a ribonucleoside 5'-diphosphate + ATP = a ribonucleoside 5'-triphosphate + ADP. Major role in the synthesis of nucleoside triphosphates other than ATP. The ATP gamma phosphate is transferred to the NDP beta phosphate via a ping-pong mechanism, using a phosphorylated active-site intermediate. Through the catalyzed exchange of gamma-phosphate between di- and triphosphonucleosides participates in regulation of intracellular nucleotide homeostasis. Binds to anionic phospholipids, predominantly to cardiolipin; the binding inhibits its phosphotransfer activity. Acts as a mitochondria-specific NDK; its association with cardiolipin-containing mitochondrial inner membrane is coupled to respiration suggesting that ADP locally regenerated in the mitochondrion innermembrane space by its activity is directly taken up via ANT ADP/ATP translocase into the matrix space to stimulate respiratory ATP regeneration. Proposed to increase GTP-loading on dynamin-related GTPase OPA1 in mitochondria. In vitro can induce liposome cross-linking suggesting that it can cross-link inner and outer membranes to form contact sites, and promotes intermembrane migration of anionic phosphoplipids. Promotes the redistribution of cardiolipin between the mitochondrial inner membrane and outer membrane which is implicated in pro-apoptotic signaling. This Mus musculus (Mouse) protein is Nucleoside diphosphate kinase, mitochondrial (Nme4).